We begin with the raw amino-acid sequence, 145 residues long: Transcriptional regulator ZitR (145 aa).

Positions 1–142 (MSLANQIDQF…ISQFLSVLTE (142 aa)) constitute an HTH marR-type domain. Zn(2+) contacts are provided by Glu-23, Cys-29, Glu-40, and His-41. Positions 53 to 76 (NARIAEQLKISPAAVTKALKKLQE) form a DNA-binding region, H-T-H motif. Zn(2+) contacts are provided by Glu-106, His-107, and His-111.

Homodimer.

Its activity is regulated as follows. Zinc acts as a corepressor and is required for DNA-binding activity. Binds up to two zinc ligands per monomer. Inactive under zinc deprivation. Its function is as follows. Zinc-responsive regulator that represses expression of the zit operon in the presence of zinc. Acts by binding two palindromic operator sites overlapping the -35 and -10 boxes of the zit promoter. Could be a sensitive sensor of intracellular zinc to efficiently respond to zinc variations in the environment. In Lactococcus lactis subsp. cremoris (strain MG1363), this protein is Transcriptional regulator ZitR (zitR).